We begin with the raw amino-acid sequence, 138 residues long: Histone H2B.8 (138 aa).

Over residues 1–38 the composition is skewed to basic and acidic residues; the sequence is MAPKAAEKKPAGKKPAEKAPAEKLPKAEKKITKEGGSE. A disordered region spans residues 1–45; it reads MAPKAAEKKPAGKKPAEKAPAEKLPKAEKKITKEGGSEKKKKKSK. Ala-2 is modified (n,N,N-trimethylalanine; alternate). A N,N-dimethylalanine; alternate modification is found at Ala-2. At Ala-2 the chain carries N-methylalanine; alternate. An N6-methyllysine modification is found at Lys-4. N6-acetyllysine occurs at positions 8 and 13. Residue Lys-14 is modified to N6,N6-dimethyllysine. N6-acetyllysine is present on residues Lys-18, Lys-23, Lys-29, and Lys-30. Lys-134 participates in a covalent cross-link: Glycyl lysine isopeptide (Lys-Gly) (interchain with G-Cter in ubiquitin).

It belongs to the histone H2B family. The nucleosome is a histone octamer containing two molecules each of H2A, H2B, H3 and H4 assembled in one H3-H4 heterotetramer and two H2A-H2B heterodimers. The octamer wraps approximately 147 bp of DNA. Post-translationally, can be acetylated to form H2BK6ac, H2BK33ac and H2BK34ac. In terms of processing, monoubiquitinated by BRE1 to form H2BK143ub1 and deubiquitinated by UBP26. Required for heterochromatic histone H3 di- and trimethylation at H3K4me. May give a specific tag for epigenetic transcriptional activation.

It is found in the nucleus. The protein localises to the chromosome. In terms of biological role, core component of nucleosome. Nucleosomes wrap and compact DNA into chromatin, limiting DNA accessibility to the cellular machineries which require DNA as a template. Histones thereby play a central role in transcription regulation, DNA repair, DNA replication and chromosomal stability. DNA accessibility is regulated via a complex set of post-translational modifications of histones, also called histone code, and nucleosome remodeling. This is Histone H2B.8 from Arabidopsis thaliana (Mouse-ear cress).